A 546-amino-acid polypeptide reads, in one-letter code: CTP synthase (546 aa).

Residues 1–266 form an amidoligase domain region; that stretch reads MTTNYIFVTG…DDLVCQRFGI (266 aa). S14 is a binding site for CTP. A UTP-binding site is contributed by S14. Residues 15–20 and D72 contribute to the ATP site; that span reads SLGKGI. Mg(2+)-binding residues include D72 and E140. CTP is bound by residues 147-149, 187-192, and K223; these read DIE and KTKPTQ. Residues 187–192 and K223 each bind UTP; that span reads KTKPTQ. 239-241 lines the ATP pocket; sequence KDV. Residues 291 to 542 enclose the Glutamine amidotransferase type-1 domain; the sequence is VIGMVGKYIE…VKAAGESVRG (252 aa). Residue G352 participates in L-glutamine binding. The active-site Nucleophile; for glutamine hydrolysis is C379. Residues 380–383, E403, and R470 each bind L-glutamine; that span reads LGMQ. Residues H515 and E517 contribute to the active site.

Belongs to the CTP synthase family. Homotetramer.

The enzyme catalyses UTP + L-glutamine + ATP + H2O = CTP + L-glutamate + ADP + phosphate + 2 H(+). It carries out the reaction L-glutamine + H2O = L-glutamate + NH4(+). It catalyses the reaction UTP + NH4(+) + ATP = CTP + ADP + phosphate + 2 H(+). The protein operates within pyrimidine metabolism; CTP biosynthesis via de novo pathway; CTP from UDP: step 2/2. Its activity is regulated as follows. Allosterically activated by GTP, when glutamine is the substrate; GTP has no effect on the reaction when ammonia is the substrate. The allosteric effector GTP functions by stabilizing the protein conformation that binds the tetrahedral intermediate(s) formed during glutamine hydrolysis. Inhibited by the product CTP, via allosteric rather than competitive inhibition. Functionally, catalyzes the ATP-dependent amination of UTP to CTP with either L-glutamine or ammonia as the source of nitrogen. Regulates intracellular CTP levels through interactions with the four ribonucleotide triphosphates. This chain is CTP synthase, found in Aliivibrio fischeri (strain MJ11) (Vibrio fischeri).